Here is a 469-residue protein sequence, read N- to C-terminus: Glutamine synthetase (469 aa).

The region spanning 13 to 97 (HEVKFVDLRF…IRCDILEPGT (85 aa)) is the GS beta-grasp domain. Residues 105–469 (PRSIAKRAED…PVEFELYYSV (365 aa)) enclose the GS catalytic domain. Positions 130 and 132 each coordinate Mg(2+). E208 is a binding site for ATP. Mg(2+)-binding residues include E213 and E221. L-glutamate is bound by residues 265 to 266 (NG) and G266. Mg(2+) is bound at residue H270. ATP contacts are provided by residues 272–274 (HMS) and S274. L-glutamate-binding residues include R322, E328, and R340. Positions 340, 345, and 353 each coordinate ATP. E358 lines the Mg(2+) pocket. R360 contributes to the L-glutamate binding site. An O-AMP-tyrosine modification is found at Y398.

It belongs to the glutamine synthetase family. Oligomer of 12 subunits arranged in the form of two hexameric ring. It depends on Mg(2+) as a cofactor.

It is found in the cytoplasm. The catalysed reaction is L-glutamate + NH4(+) + ATP = L-glutamine + ADP + phosphate + H(+). The activity of this enzyme could be controlled by adenylation under conditions of abundant glutamine. In terms of biological role, catalyzes the ATP-dependent biosynthesis of glutamine from glutamate and ammonia. In Escherichia coli O157:H7, this protein is Glutamine synthetase.